The sequence spans 397 residues: MSIMDDLMEGRIKLYEIERHVPVDEAVRIRREFIERTCGVKLEHVSNYSIDMERASRRNIENPIGVVQIPLGVAGPLRVRGEHADGEYYVPLATSEGALVASVNRGCSVITRAGGATVRVTGDSMTRAPVIRTGSVVEALQLREWIYENMDALREEAESTTRHGKLVKIDPIIVAGSYVYPRFVYTTGDSMGMNMVTIATERALELLTRETGAHVIALSGNLCTDKKPAAVNLIEGRGKSITAEITVPGEMVESVLKTTPEAVVEVNTAKNLIGSAAAGSMGFNAHYANIIGAIFLATGQDEAHIVEGSLGVTIAEERKGDLYFAVNLPDVPLATVGGGTGLETASECLDIMGVRGGGRVHAFAEIVGGAVLAGELSLMGALAAGHLARAHSELGRG.

Catalysis depends on charge relay system residues Glu-96 and Asp-301. Catalysis depends on His-391, which acts as the Proton donor.

Belongs to the HMG-CoA reductase family.

It catalyses the reaction (R)-mevalonate + 2 NADP(+) + CoA = (3S)-3-hydroxy-3-methylglutaryl-CoA + 2 NADPH + 2 H(+). It participates in metabolic intermediate biosynthesis; (R)-mevalonate biosynthesis; (R)-mevalonate from acetyl-CoA: step 3/3. Converts HMG-CoA to mevalonate. This chain is 3-hydroxy-3-methylglutaryl-coenzyme A reductase (hmgA), found in Methanothermobacter thermautotrophicus (strain ATCC 29096 / DSM 1053 / JCM 10044 / NBRC 100330 / Delta H) (Methanobacterium thermoautotrophicum).